The following is a 548-amino-acid chain: Chaperonin GroEL (548 aa).

ATP contacts are provided by residues 29–32 (TMGP), Lys-50, 86–90 (DGTTT), Gly-414, 478–480 (NAA), and Asp-494.

This sequence belongs to the chaperonin (HSP60) family. As to quaternary structure, forms a cylinder of 14 subunits composed of two heptameric rings stacked back-to-back. Interacts with the co-chaperonin GroES.

Its subcellular location is the cytoplasm. It catalyses the reaction ATP + H2O + a folded polypeptide = ADP + phosphate + an unfolded polypeptide.. Its function is as follows. Together with its co-chaperonin GroES, plays an essential role in assisting protein folding. The GroEL-GroES system forms a nano-cage that allows encapsulation of the non-native substrate proteins and provides a physical environment optimized to promote and accelerate protein folding. This is Chaperonin GroEL from Legionella pneumophila (strain Corby).